The primary structure comprises 85 residues: Large ribosomal subunit protein bL27 (85 aa).

The segment at 1-23 (MAHKKAGGSTRNGRDSESKRLGV) is disordered.

The protein belongs to the bacterial ribosomal protein bL27 family.

This chain is Large ribosomal subunit protein bL27, found in Thioalkalivibrio sulfidiphilus (strain HL-EbGR7).